The primary structure comprises 1098 residues: MLNSSKSILIHAQNKNGTHEEEQYLFAVNNTKAEYPRDKTIHQLFEEQVSKRPNNVAIVCENEQLTYHELNVKANQLARIFIEKGIGKDTLVGIMMEKSIDLFIGILAVLKAGGAYVPIDIEYPKERIQYILDDSQARMLLTQKHLVHLIHNIQFNGQVEIFEEDTIKIREGTNLHVPSKSTDLAYVIYTSGTTGNPKGTMLEHKGISNLKVFFENSLNVTEKDRIGQFASISFDASVWEMFMALLTGASLYIILKDTINDFVKFEQYINQKEITVITLPPTYVVHLDPERILSIQTLITAGSATSPSLVNKWKEKVTYINAYGPTETTICATTWVATKETTGHSVPIGAPIQNTQIYIVDENLQLKSVGEAGELCIGGEGLARGYWKRPELTSQKFVDNPFVPGEKLYKTGDQARWLPDGNIEYLGRIDNQVKIRGHRVELEEVESILLKHMYISETAVSVHKDHQEQPYLCAIFVSEKHIPLEQLRQFSSEELPTYMIPSYFIQLDKMPLTSNGKIDRKQLPEPDLTFGMRVDYEAPRNEIEETLVTIWQDVLGIEKIGIKDNFYALGGDSIKAIQVAARLHSYQLKLETKDLLKYPTIDQLVHYIKDSKRRSEQGIVEGEIGLTPIQHWFFEQQFTNMHHWNQSYMLYRPNGFDKEILLRVFNKIVEHHDALRMIYKHHNGKIVQINRGLEGTLFDFYTFDLTANDNEQQVICEESARLQNSINLEVGPLVKIALFHTQNGDHLFMAIHHLVVDGISWRILFEDLATAYEQAMHQQTIALPEKTDSFKDWSIELEKYANSELFLEEAEYWHHLNYYTDNVQIKKDYVTMNNKQKNIRYVGMELTIEETEKLLKNVNKAYRTEINDILLTALGFALKEWADIDKIVINLEGHGREEILEQMNIARTVGWFTSQYPVVLDMQKSDDLSYQIKLMKENLRRIPNKGIGYEIFKYLTTEYLRPVLPFTLKPEINFNYLGQFDTDVKTELFTRSPYSMGNSLGPDGKNNLSPEGESYFVLNINGFIEEGKLHITFSYNEQQYKEDTIQQLSRSYKQHLLAIIEHCVQKEDTELTPSDFSFKELELEEMDDIFDLLADSLT.

The Carrier domain occupies 538–612; the sequence is APRNEIEETL…QLVHYIKDSK (75 aa). Position 573 is an O-(pantetheine 4'-phosphoryl)serine (serine 573).

The protein belongs to the ATP-dependent AMP-binding enzyme family. Large multienzyme complex of GrsA and GrsB. Pantetheine 4'-phosphate is required as a cofactor.

It carries out the reaction L-phenylalanine + ATP + H2O = D-phenylalanine + AMP + diphosphate + H(+). It participates in antibiotic biosynthesis; gramicidin S biosynthesis. In terms of biological role, in the first step of peptide synthesis this enzyme activates phenylalanine and racemizes it to the D-isomer. This Brevibacillus brevis (Bacillus brevis) protein is Gramicidin S synthase 1 (grsA).